Here is a 292-residue protein sequence, read N- to C-terminus: MIKNLLNKRKYITVSSVELNDTELNEDEKPNIPSGMWSKCEKCAKILYTEDLRENFNVCPNCGHHFKLGAYERIKYLTDENTFVEFDKKMVGRNPLDFNGYEEKIKGYQKKSHVIEGVVTGEAYIAQRKVVLCVMDSNFMMGSMGTAVGEKITRAIEYATKNRLPLIIFTCSGGARMQEGIYSLMQMAKVSGAIYRHGRENLLYITVLTNPTTGGVTASFAMEGDIILSEPGCLVGFAGRRVIEGTINEKLPDDFQTAEFLLEKGFIDKIVQRKDLKQVITSLLRMHEVDYE.

Residues 36–292 enclose the CoA carboxyltransferase N-terminal domain; it reads MWSKCEKCAK…LLRMHEVDYE (257 aa). Positions 40, 43, 59, and 62 each coordinate Zn(2+). The segment at 40–62 adopts a C4-type zinc-finger fold; the sequence is CEKCAKILYTEDLRENFNVCPNC.

This sequence belongs to the AccD/PCCB family. Acetyl-CoA carboxylase is a heterohexamer composed of biotin carboxyl carrier protein (AccB), biotin carboxylase (AccC) and two subunits each of ACCase subunit alpha (AccA) and ACCase subunit beta (AccD). Zn(2+) is required as a cofactor.

The protein localises to the cytoplasm. The enzyme catalyses N(6)-carboxybiotinyl-L-lysyl-[protein] + acetyl-CoA = N(6)-biotinyl-L-lysyl-[protein] + malonyl-CoA. It participates in lipid metabolism; malonyl-CoA biosynthesis; malonyl-CoA from acetyl-CoA: step 1/1. Component of the acetyl coenzyme A carboxylase (ACC) complex. Biotin carboxylase (BC) catalyzes the carboxylation of biotin on its carrier protein (BCCP) and then the CO(2) group is transferred by the transcarboxylase to acetyl-CoA to form malonyl-CoA. In Clostridium perfringens (strain ATCC 13124 / DSM 756 / JCM 1290 / NCIMB 6125 / NCTC 8237 / Type A), this protein is Acetyl-coenzyme A carboxylase carboxyl transferase subunit beta.